The sequence spans 150 residues: Large ribosomal subunit protein bL9 (150 aa).

It belongs to the bacterial ribosomal protein bL9 family.

Functionally, binds to the 23S rRNA. In Alkalilimnicola ehrlichii (strain ATCC BAA-1101 / DSM 17681 / MLHE-1), this protein is Large ribosomal subunit protein bL9.